Here is a 1704-residue protein sequence, read N- to C-terminus: MYAKATDVARVYAAADVAYANVLQQRAVKLDFAPPLKALETLHRLYYPLRFKGGTLPPTQHPILAGHQRVAEEVLHNFARGRSTVLEIGPSLHSALKLHGAPNAPVADYHGCTKYGTRDGSRHITALESRSVATGRPEFKADASLLANGIASRTFCVDGVGSCAFKSRVGIANHSLYDVTLEELANAFENHGLHMVRAFMHMPEELLYMDNVVNAELGYRFHVIEEPMAVKDCAFQGGDLRLHFPELDFINESQERRIERLAARGSYSRRAVIFSGDDDWGDAYLHDFHTWLAYLLVRNYPTPFGFSLHIEVQRRHGSSIELRITRAPPGDRMLAVVPRTSQGLCRIPNIFYYADASGTEHKTILTSQHKVNMLLNFMQTRPEKELVDMTVLMSFARARLRAIVVASEVTESSWNISPADLVRTVVSLYVLHIIERRRAAVAVKTAKDDVFGETSFWESLKHVLGSCCGLRNLKGTDVVFTKRVVDKYRVHSLGDIICDVRLSPEQVGFLPSRVPPARVFHDREELEVLREAGCYNERPVPSTPPVEEPQGFDADLWHATAASLPEYRATLQAGLNTDVKQLKITLENALKTIDGLTLSPVRGLEMYEGPPGSGKTGTLIAALEAAGGKALYVAPTRELREAMDRRIKPPSASRTQHVALAILRRATAEGAPFATVVIDECFMFPLVYVAIVHALSPSSRIVLVGDVHQIGFIDFQGTSANMPLVRDVVKQCRRRTFNQTKRCPADVVATTFFQSLYPGCTTTSGCVASISHVAPDYRNSQAQTLCFTQEEKSRHGAEGAMTVHEAQGRTFASVILHYNGSTAEQKLLAEKSHLLVGITRHTNHLYIRDPTGDIERQLNHSAKAEVFTDIPAPLEITTVKPSEEVQRNEVMATIPPQSPTPHGAIHLLRKNFGDQPDCGCVALAKTGYEVFGGRAKINVELAEPDATPKPHRAFQEGVQWVKVTNASNKHQALQTLLSRYTKRSADLPLHEAKEDVKRMLNSLDRHWDWTVTEDARDRAVFETQLKFTQRGGTVEDLLEPDDPYIRDIDFLMKTQQKVSPKPINTGKVGQGIAAHSKSLNFVLAAWIRILEEILRTGSRTVRYSNGLPDEEEAMLLEAKINQVPHATFVSADWTEFDTAHNNTSELLFAALLERIGTPAAAVNLFRERCGKRTLRAKGLGSVEVDGLLDSGAAWTPCRNTIFSAAVMLTLFRGVKFAAFKGDDSLLCGSHYLRFDASRLHMGERYKTKHLKVEVQKIVPYIGLLVSAEQVVLDPVRSALKIFGRCYTSELLYSKYVEAVRDITKGWSDARYHSLLCHMSACYYNYAPESAAYIIDAVVRFGRGDFPFEQLRVVRAHVQAPDAYSSTYPANVRASCLDHVFEPRQAAAPAGFVATCAKPETPSSLTAKAGVSATTSHVATGTAPPESPWDAPAANSFSELLTPETPSTSSSAVIVFIGLLYIVWKVAQWWRHRKRTEDLNSRKPPSQDRQSRSSECLDRSGERTGSSLTAPTAPSPSFSFSERARLATGPTVAAATSPSATPSCATDQVAARTTPDFAPFLGSQSARAVSKPYRPPTTARWKEVTPLHAWKGVTGDRPEVREDPETAAVVQALISGRYPQKTKLSSDASKGYSRTKGCSQSTSFPAPSADYQARDCQTVRVCRAAAEMARSCIHEPLASSAASADLKRIRSTSDSVPDVKISKSA.

Positions Lys-52 to Leu-295 constitute an Alphavirus-like MT domain. In terms of domain architecture, (+)RNA virus helicase ATP-binding spans Leu-575–Phe-737. The (+)RNA virus helicase C-terminal domain maps to Asn-738 to Lys-880. Over residues Thr-1475–Glu-1501 the composition is skewed to basic and acidic residues. Disordered stretches follow at residues Thr-1475–Ser-1518, Thr-1621–Asp-1649, and Ser-1678–Ala-1704. Over residues Ser-1505–Ser-1518 the composition is skewed to low complexity. Residues Lys-1635–Pro-1644 are compositionally biased toward polar residues.

This sequence belongs to the ssRNA positive-strand viruses RNA-directed RNA polymerase family.

The protein localises to the host cytoplasm. The catalysed reaction is RNA(n) + a ribonucleoside 5'-triphosphate = RNA(n+1) + diphosphate. The enzyme catalyses ATP + H2O = ADP + phosphate + H(+). RNA-dependent RNA polymerase replicates the viral genome composed of 2 RNA segments, RNA1 and RNA2. The polypeptide is Methyltransferase/helicase/RNA-directed RNA polymerase (Helicoverpa armigera (Cotton bollworm)).